We begin with the raw amino-acid sequence, 330 residues long: Autoinducer 2 import system permease protein LsrD (330 aa).

Residues 1–4 lie on the Cytoplasmic side of the membrane; it reads MRIR. The chain crosses the membrane as a helical span at residues 5–25; that stretch reads YGWELALAALLVIEIVSFGAI. The Periplasmic portion of the chain corresponds to 26–42; that stretch reads NPRMLDLNMLLFSTSDF. The chain crosses the membrane as a helical span at residues 43-63; the sequence is ICIGIVALPLTMVIVSGGIDI. Residues 64–67 lie on the Cytoplasmic side of the membrane; sequence SFGS. 2 helical membrane passes run 68–88 and 89–109; these read TIGLCAIALGVLFQSGVPMPL and AILLTLLLGALCGLINAGLII. At 110 to 115 the chain is on the cytoplasmic side; that stretch reads YTKVNP. Residues 116–136 form a helical membrane-spanning segment; that stretch reads LVITLGTLYLFAGSALLLSGM. Topologically, residues 137–159 are periplasmic; the sequence is AGATGYEGIGGFPMAFTDFANLD. Residues 160–180 form a helical membrane-spanning segment; the sequence is VLGLPVPLIIFLICLLVFWLW. The Cytoplasmic segment spans residues 181 to 209; it reads LHKTHAGRNVFLIGQSPRVALYSAIPVNR. Residues 210–230 traverse the membrane as a helical segment; it reads TLCALYAMTGLASAVAAVLLV. Topologically, residues 231-237 are periplasmic; it reads SYFGSAR. The next 2 helical transmembrane spans lie at 238–258 and 259–279; these read SDLGASFLMPAITAVVLGGAN and IYGGSGAIIGTAIAVLLVGYL. Residues 280 to 285 lie on the Periplasmic side of the membrane; sequence QQGLQM. Residues 286 to 306 form a helical membrane-spanning segment; it reads AGVPNQVSSALSGALLIVVVV. The Cytoplasmic portion of the chain corresponds to 307-330; sequence GRSVSLHRQQIKEWLARRANNPLP.

This sequence belongs to the binding-protein-dependent transport system permease family. AraH/RbsC subfamily. In terms of assembly, the complex is composed of two ATP-binding proteins (LsrA), two transmembrane proteins (LsrC and LsrD) and a solute-binding protein (LsrB).

It localises to the cell inner membrane. Part of the ABC transporter complex LsrABCD involved in autoinducer 2 (AI-2) import. Probably responsible for the translocation of the substrate across the membrane. The polypeptide is Autoinducer 2 import system permease protein LsrD (lsrD) (Escherichia coli O157:H7).